The following is a 77-amino-acid chain: Small ribosomal subunit protein bS20 (77 aa).

The tract at residues 47 to 77 is disordered; sequence ASSSIDKAESKGLIHKNKASRDKARLAAKLG.

The protein belongs to the bacterial ribosomal protein bS20 family.

Its function is as follows. Binds directly to 16S ribosomal RNA. The chain is Small ribosomal subunit protein bS20 from Streptococcus pyogenes serotype M1.